We begin with the raw amino-acid sequence, 117 residues long: MATYSLANERLRALEDIEREIGAILQNAGTAILELSKEKTNERLLDRQAAAFTTSVQHVEAELSAQIRYLTQVATGQPHEGSSYSSRKDCQMALKRVDYARLKISDVARTCEQMLEN.

Ala2 bears the N-acetylalanine mark.

This sequence belongs to the Mediator complex subunit 11 family. Component of the Mediator complex, which is composed of MED1, MED4, MED6, MED7, MED8, MED9, MED10, MED11, MED12, MED13, MED13L, MED14, MED15, MED16, MED17, MED18, MED19, MED20, MED21, MED22, MED23, MED24, MED25, MED26, MED27, MED29, MED30, MED31, CCNC, CDK8 and CDC2L6/CDK11. The MED12, MED13, CCNC and CDK8 subunits form a distinct module termed the CDK8 module. Mediator containing the CDK8 module is less active than Mediator lacking this module in supporting transcriptional activation. Individual preparations of the Mediator complex lacking one or more distinct subunits have been variously termed ARC, CRSP, DRIP, PC2, SMCC and TRAP. In terms of tissue distribution, expressed in cochlea.

Its subcellular location is the nucleus. Its function is as follows. Component of the Mediator complex, a coactivator involved in the regulated transcription of nearly all RNA polymerase II-dependent genes. Mediator functions as a bridge to convey information from gene-specific regulatory proteins to the basal RNA polymerase II transcription machinery. Mediator is recruited to promoters by direct interactions with regulatory proteins and serves as a scaffold for the assembly of a functional pre-initiation complex with RNA polymerase II and the general transcription factors. The protein is Mediator of RNA polymerase II transcription subunit 11 (Med11) of Mus musculus (Mouse).